Here is a 322-residue protein sequence, read N- to C-terminus: Eukaryotic translation initiation factor 3 subunit I (322 aa).

5 WD repeats span residues 4-43, 46-85, 141-180, 184-223, and 281-322; these read GHER…RLGT, GHQG…VIAS, MTES…KVVD, DHTG…CLKT, and GHFG…NIFE.

This sequence belongs to the eIF-3 subunit I family. As to quaternary structure, component of the eukaryotic translation initiation factor 3 (eIF-3) complex. The eIF-3 complex interacts with pix.

Its subcellular location is the cytoplasm. Component of the eukaryotic translation initiation factor 3 (eIF-3) complex, which is involved in protein synthesis of a specialized repertoire of mRNAs and, together with other initiation factors, stimulates binding of mRNA and methionyl-tRNAi to the 40S ribosome. The eIF-3 complex specifically targets and initiates translation of a subset of mRNAs involved in cell proliferation. This chain is Eukaryotic translation initiation factor 3 subunit I, found in Drosophila willistoni (Fruit fly).